The following is a 500-amino-acid chain: Squalene epoxidase ERG1 (500 aa).

The helical transmembrane segment at 20-40 threads the bilayer; sequence EADVVVVGAGVFGCTMAFALA. FAD contacts are provided by residues 30–31, 50–51, Arg58, Arg145, Asp332, and Met345; these read VF and ER. Transmembrane regions (helical) follow at residues 450-470 and 474-494; these read AFLA…LGIF and LAII…IPIM.

Belongs to the squalene monooxygenase family. Requires FAD as cofactor.

Its subcellular location is the microsome membrane. It is found in the endoplasmic reticulum membrane. It localises to the lipid droplet. It carries out the reaction squalene + reduced [NADPH--hemoprotein reductase] + O2 = (S)-2,3-epoxysqualene + oxidized [NADPH--hemoprotein reductase] + H2O + H(+). It functions in the pathway terpene metabolism; lanosterol biosynthesis; lanosterol from farnesyl diphosphate: step 2/3. Its pathway is steroid metabolism; ergosterol biosynthesis. Squalene epoxidase; part of the third module of ergosterol biosynthesis pathway that includes the late steps of the pathway. ERG1 catalyzes the epoxidation of squalene into 2,3-epoxysqualene. The third module or late pathway involves the ergosterol synthesis itself through consecutive reactions that mainly occur in the endoplasmic reticulum (ER) membrane. Firstly, the squalene synthase ERG9 catalyzes the condensation of 2 farnesyl pyrophosphate moieties to form squalene, which is the precursor of all steroids. Squalene synthase is crucial for balancing the incorporation of farnesyl diphosphate (FPP) into sterol and nonsterol isoprene synthesis. Secondly, squalene is converted into lanosterol by the consecutive action of the squalene epoxidase ERG1 and the lanosterol synthase ERG7. Then, the delta(24)-sterol C-methyltransferase ERG6 methylates lanosterol at C-24 to produce eburicol. Eburicol is the substrate of the sterol 14-alpha demethylase encoded by CYP51A, CYP51B and CYP51C, to yield 4,4,24-trimethyl ergosta-8,14,24(28)-trienol. CYP51B encodes the enzyme primarily responsible for sterol 14-alpha-demethylation, and plays an essential role in ascospore formation. CYP51A encodes an additional sterol 14-alpha-demethylase, induced on ergosterol depletion and responsible for the intrinsic variation in azole sensitivity. The third CYP51 isoform, CYP51C, does not encode a sterol 14-alpha-demethylase, but is required for full virulence on host wheat ears. The C-14 reductase ERG24 then reduces the C14=C15 double bond which leads to 4,4-dimethylfecosterol. A sequence of further demethylations at C-4, involving the C-4 demethylation complex containing the C-4 methylsterol oxidases ERG25, the sterol-4-alpha-carboxylate 3-dehydrogenase ERG26 and the 3-keto-steroid reductase ERG27, leads to the production of fecosterol via 4-methylfecosterol. ERG28 has a role as a scaffold to help anchor ERG25, ERG26 and ERG27 to the endoplasmic reticulum. The C-8 sterol isomerase ERG2 then catalyzes the reaction which results in unsaturation at C-7 in the B ring of sterols and thus converts fecosterol to episterol. The sterol-C5-desaturases ERG3A and ERG3BB then catalyze the introduction of a C-5 double bond in the B ring to produce 5-dehydroepisterol. The C-22 sterol desaturases ERG5A and ERG5B further convert 5-dehydroepisterol into ergosta-5,7,22,24(28)-tetraen-3beta-ol by forming the C-22(23) double bond in the sterol side chain. Finally, ergosta-5,7,22,24(28)-tetraen-3beta-ol is substrate of the C-24(28) sterol reductase ERG4 to produce ergosterol. This Gibberella zeae (strain ATCC MYA-4620 / CBS 123657 / FGSC 9075 / NRRL 31084 / PH-1) (Wheat head blight fungus) protein is Squalene epoxidase ERG1.